The chain runs to 190 residues: MALEFLAATRGMDNLVMSCSVTLLFSSSLSFVLAIKNLTKSSFVVSKDKLPIQTPYLFSSFFFFFTTSPDSSPVGVLIVDSSPWASFSEAPDFFFSASSLYSSIDLGSILYFAFNSSRVTLPLLKRRFCFFDRGMELFRSISISSSAFLFFVGSSKAFLTCSSLSFFVTASSFDSSVSDILSQIIESCWV.

A run of 4 helical transmembrane segments spans residues 15–35 (LVMS…VLAI), 58–78 (FSSF…GVLI), 94–114 (FFSA…YFAF), and 148–168 (FLFF…SFFV).

Its subcellular location is the membrane. This is an uncharacterized protein from Saccharomyces cerevisiae (strain ATCC 204508 / S288c) (Baker's yeast).